Consider the following 118-residue polypeptide: MLKEYLGISLFLAAGLIIPFLAFAVSRLLQTRKNSLVKGEPYECGMETIGDTWIQFKSNYFLYALVFVAFDVETVFLYPWAVKFQQLGTFAIVEMFIFITILVVGFWYAWKEGALEWK.

3 helical membrane-spanning segments follow: residues 5–25 (YLGI…AFAV), 61–81 (FLYA…YPWA), and 90–110 (FAIV…WYAW).

It belongs to the complex I subunit 3 family. In terms of assembly, NDH-1 is composed of 14 different subunits. Subunits NuoA, H, J, K, L, M, N constitute the membrane sector of the complex.

Its subcellular location is the cell membrane. It carries out the reaction a quinone + NADH + 5 H(+)(in) = a quinol + NAD(+) + 4 H(+)(out). Functionally, NDH-1 shuttles electrons from NADH, via FMN and iron-sulfur (Fe-S) centers, to quinones in the respiratory chain. The immediate electron acceptor for the enzyme in this species is believed to be a menaquinone. Couples the redox reaction to proton translocation (for every two electrons transferred, four hydrogen ions are translocated across the cytoplasmic membrane), and thus conserves the redox energy in a proton gradient. The chain is NADH-quinone oxidoreductase subunit A from Heliobacterium modesticaldum (strain ATCC 51547 / Ice1).